A 151-amino-acid polypeptide reads, in one-letter code: MLP-like protein 328 (151 aa).

The protein belongs to the MLP family.

The sequence is that of MLP-like protein 328 (MLP328) from Arabidopsis thaliana (Mouse-ear cress).